The sequence spans 345 residues: Succinylglutamate desuccinylase (345 aa).

Zn(2+) contacts are provided by histidine 64, glutamate 67, and histidine 161. The active site involves glutamate 225.

It belongs to the AspA/AstE family. Succinylglutamate desuccinylase subfamily. It depends on Zn(2+) as a cofactor.

It carries out the reaction N-succinyl-L-glutamate + H2O = L-glutamate + succinate. Its pathway is amino-acid degradation; L-arginine degradation via AST pathway; L-glutamate and succinate from L-arginine: step 5/5. Its function is as follows. Transforms N(2)-succinylglutamate into succinate and glutamate. The polypeptide is Succinylglutamate desuccinylase (Shewanella pealeana (strain ATCC 700345 / ANG-SQ1)).